Here is a 669-residue protein sequence, read N- to C-terminus: Acetyl-coenzyme A synthetase (669 aa).

Residues 211-214 and T329 contribute to the CoA site; that span reads RGGK. Residues 404-406, 428-433, D519, and R534 contribute to the ATP site; these read GEP and DTYWQT. Residue S542 participates in CoA binding. Residue R545 coordinates ATP. R602 contacts CoA.

Belongs to the ATP-dependent AMP-binding enzyme family.

The enzyme catalyses acetate + ATP + CoA = acetyl-CoA + AMP + diphosphate. It functions in the pathway ketone degradation; acetoin degradation. It participates in antibiotic biosynthesis; penicillin biosynthesis. The chain is Acetyl-coenzyme A synthetase (facA) from Penicillium chrysogenum (Penicillium notatum).